The sequence spans 249 residues: ATP-dependent dethiobiotin synthetase BioD (249 aa).

Residue 11-16 (NVGKTI) coordinates ATP. Residue T15 coordinates Mg(2+). The active site involves K31. Substrate is bound at residue T35. Residues D40, 127–130 (EGAG), 188–189 (NS), and 215–217 (PYL) contribute to the ATP site. 2 residues coordinate Mg(2+): D40 and E127.

The protein belongs to the dethiobiotin synthetase family. As to quaternary structure, homodimer. The cofactor is Mg(2+).

The protein localises to the cytoplasm. The enzyme catalyses (7R,8S)-7,8-diammoniononanoate + CO2 + ATP = (4R,5S)-dethiobiotin + ADP + phosphate + 3 H(+). Its pathway is cofactor biosynthesis; biotin biosynthesis; biotin from 7,8-diaminononanoate: step 1/2. In terms of biological role, catalyzes a mechanistically unusual reaction, the ATP-dependent insertion of CO2 between the N7 and N8 nitrogen atoms of 7,8-diaminopelargonic acid (DAPA, also called 7,8-diammoniononanoate) to form a ureido ring. The protein is ATP-dependent dethiobiotin synthetase BioD of Neorickettsia sennetsu (strain ATCC VR-367 / Miyayama) (Ehrlichia sennetsu).